Here is a 128-residue protein sequence, read N- to C-terminus: MSYQPNKVLEVFDNPKIERDFIIQINMPEFTCLCPKTGQPDFATLHFAYIADKACIELKSLKMYIWLYRNEGAFHEAVTNQILDDLVQVSNPRFIRLKAIFNIRGGVYTTIITEHKQKNWTPKAKVDL.

Cys-34 (thioimide intermediate) is an active-site residue. Asp-41 serves as the catalytic Proton donor. Residues 56 to 58 (IEL) and 75 to 76 (HE) each bind substrate.

Belongs to the GTP cyclohydrolase I family. QueF type 1 subfamily.

It localises to the cytoplasm. The catalysed reaction is 7-aminomethyl-7-carbaguanine + 2 NADP(+) = 7-cyano-7-deazaguanine + 2 NADPH + 3 H(+). The protein operates within tRNA modification; tRNA-queuosine biosynthesis. Its function is as follows. Catalyzes the NADPH-dependent reduction of 7-cyano-7-deazaguanine (preQ0) to 7-aminomethyl-7-deazaguanine (preQ1). The protein is NADPH-dependent 7-cyano-7-deazaguanine reductase of Ruthia magnifica subsp. Calyptogena magnifica.